We begin with the raw amino-acid sequence, 77 residues long: MKLTCVLIIAVLFLTASQLITADYSRDKQEYGAERLRDAMGKFKGSRSCGHSGAGCYTRPCCPGLHCSGGHAGGLCV.

Positions 1 to 22 (MKLTCVLIIAVLFLTASQLITA) are cleaved as a signal peptide. A propeptide spanning residues 23–47 (DYSRDKQEYGAERLRDAMGKFKGSR) is cleaved from the precursor. 3 disulfides stabilise this stretch: Cys49–Cys62, Cys56–Cys67, and Cys61–Cys76.

It belongs to the conotoxin O1 superfamily. Expressed by the venom duct.

Its subcellular location is the secreted. The polypeptide is Conotoxin LiC42 (Conus lividus (Livid cone)).